Here is a 357-residue protein sequence, read N- to C-terminus: Protein-glutamate methylesterase/protein-glutamine glutaminase 5 (357 aa).

One can recognise a Response regulatory domain in the interval 10–127 (RVLVVDDSSF…IDAQKAFKEE (118 aa)). A 4-aspartylphosphate modification is found at D61. A CheB-type methylesterase domain is found at 161–357 (PRPAGQRYQY…IGTEITKIAG (197 aa)). Catalysis depends on residues S176, H203, and D301.

This sequence belongs to the CheB family. In terms of processing, phosphorylated by CheA. Phosphorylation of the N-terminal regulatory domain activates the methylesterase activity.

The protein resides in the cytoplasm. It catalyses the reaction [protein]-L-glutamate 5-O-methyl ester + H2O = L-glutamyl-[protein] + methanol + H(+). It carries out the reaction L-glutaminyl-[protein] + H2O = L-glutamyl-[protein] + NH4(+). In terms of biological role, involved in chemotaxis. Part of a chemotaxis signal transduction system that modulates chemotaxis in response to various stimuli. Catalyzes the demethylation of specific methylglutamate residues introduced into the chemoreceptors (methyl-accepting chemotaxis proteins or MCP) by CheR. Also mediates the irreversible deamidation of specific glutamine residues to glutamic acid. This Geobacter metallireducens (strain ATCC 53774 / DSM 7210 / GS-15) protein is Protein-glutamate methylesterase/protein-glutamine glutaminase 5.